Here is a 1247-residue protein sequence, read N- to C-terminus: Respiratory nitrate reductase 1 alpha chain (1247 aa).

Residues 43-107 (DKIVRSTHGV…SYSWYLYSAN (65 aa)) form the 4Fe-4S Mo/W bis-MGD-type domain. Positions 50, 54, 58, and 93 each coordinate [4Fe-4S] cluster. Mo-bis(molybdopterin guanine dinucleotide) is bound at residue D223.

This sequence belongs to the prokaryotic molybdopterin-containing oxidoreductase family. In terms of assembly, dimer of heterotrimers each composed of an alpha, a beta and a gamma chain. Alpha and beta are catalytic chains; gamma chains are involved in binding the enzyme complex to the cytoplasmic membrane. Interacts with the NarJ chaperone. The cofactor is [4Fe-4S] cluster. Mo-bis(molybdopterin guanine dinucleotide) is required as a cofactor.

The protein localises to the cell membrane. The enzyme catalyses nitrate + a quinol = a quinone + nitrite + H2O. In terms of biological role, the nitrate reductase enzyme complex allows E.coli to use nitrate as an electron acceptor during anaerobic growth. The alpha chain is the actual site of nitrate reduction. This is Respiratory nitrate reductase 1 alpha chain (narG) from Escherichia coli (strain K12).